Consider the following 636-residue polypeptide: Carbon monoxide dehydrogenase 1 (636 aa).

The [4Fe-4S] cluster site is built by Cys-38, Cys-46, Cys-47, Cys-50, Cys-55, and Cys-69. [Ni-4Fe-5S] cluster-binding residues include His-262, Cys-297, Cys-335, Cys-448, Cys-478, and Cys-528.

Belongs to the Ni-containing carbon monoxide dehydrogenase family. In terms of assembly, homodimer. [4Fe-4S] cluster serves as cofactor. The cofactor is [Ni-4Fe-5S] cluster.

The protein localises to the cytoplasm. It localises to the cell membrane. The enzyme catalyses CO + 2 oxidized [2Fe-2S]-[ferredoxin] + H2O = 2 reduced [2Fe-2S]-[ferredoxin] + CO2 + 2 H(+). Its activity is regulated as follows. Inactivated by O(2). Functionally, CODH oxidizes carbon monoxide coupled, via CooF, to the reduction of a hydrogen cation by a hydrogenase (possibly CooH). This is Carbon monoxide dehydrogenase 1 (cooS1) from Carboxydothermus hydrogenoformans (strain ATCC BAA-161 / DSM 6008 / Z-2901).